A 505-amino-acid polypeptide reads, in one-letter code: Trans-cinnamate 4-monooxygenase (505 aa).

Residues 3 to 23 (LLLLEKTLLALFIAATIAITI) form a helical membrane-spanning segment. (E)-cinnamate is bound by residues 212-217 (RSRLAQ) and Ala305. Heme is bound at residue Cys446.

It belongs to the cytochrome P450 family. The cofactor is heme.

Its subcellular location is the membrane. The catalysed reaction is (E)-cinnamate + reduced [NADPH--hemoprotein reductase] + O2 = (E)-4-coumarate + oxidized [NADPH--hemoprotein reductase] + H2O + H(+). Its pathway is phenylpropanoid metabolism; trans-4-coumarate biosynthesis; trans-4-coumarate from trans-cinnamate: step 1/1. In terms of biological role, catalyzes the first oxidative step of the phenylpropanoid pathway in higher plants by transforming trans-cinnamate into p-coumarate. The compounds formed by this pathway are essential components for lignification, pollination, and defense against ultraviolet light, predators and pathogens. This Cicer arietinum (Chickpea) protein is Trans-cinnamate 4-monooxygenase (CYP73A19).